A 460-amino-acid polypeptide reads, in one-letter code: Argininosuccinate lyase (460 aa).

The protein belongs to the lyase 1 family. Argininosuccinate lyase subfamily.

It localises to the cytoplasm. It catalyses the reaction 2-(N(omega)-L-arginino)succinate = fumarate + L-arginine. It participates in amino-acid biosynthesis; L-arginine biosynthesis; L-arginine from L-ornithine and carbamoyl phosphate: step 3/3. The protein is Argininosuccinate lyase of Sulfurimonas denitrificans (strain ATCC 33889 / DSM 1251) (Thiomicrospira denitrificans (strain ATCC 33889 / DSM 1251)).